The following is a 109-amino-acid chain: Spermidine export protein MdtI (109 aa).

Helical transmembrane passes span 6 to 26, 36 to 56, 64 to 84, and 88 to 108; these read FYPI…NILL, WLGI…AQAV, AYAM…WILF, and LNYK…MIKL.

It belongs to the drug/metabolite transporter (DMT) superfamily. Small multidrug resistance (SMR) (TC 2.A.7.1) family. MdtI subfamily. As to quaternary structure, forms a complex with MdtJ.

Its subcellular location is the cell inner membrane. Catalyzes the excretion of spermidine. This Yersinia pseudotuberculosis serotype I (strain IP32953) protein is Spermidine export protein MdtI.